The chain runs to 330 residues: GTPase Obg (330 aa).

Positions 1–159 (MHFIDEVKIY…MWIHLRLKLL (159 aa)) constitute an Obg domain. In terms of domain architecture, OBG-type G spans 160-327 (SDVGLVGLPN…IVKLALEIIK (168 aa)). Residues 166 to 173 (GLPNAGKS), 191 to 195 (FTTLV), 212 to 215 (DIPG), 279 to 282 (NKCD), and 308 to 310 (STY) contribute to the GTP site. Mg(2+)-binding residues include Ser173 and Thr193.

The protein belongs to the TRAFAC class OBG-HflX-like GTPase superfamily. OBG GTPase family. In terms of assembly, monomer. Mg(2+) is required as a cofactor.

It localises to the cytoplasm. Its function is as follows. An essential GTPase which binds GTP, GDP and possibly (p)ppGpp with moderate affinity, with high nucleotide exchange rates and a fairly low GTP hydrolysis rate. Plays a role in control of the cell cycle, stress response, ribosome biogenesis and in those bacteria that undergo differentiation, in morphogenesis control. This is GTPase Obg from Rickettsia typhi (strain ATCC VR-144 / Wilmington).